Reading from the N-terminus, the 154-residue chain is MPAEAKKPAPKAGRSRRKSRELVLKGIYLGLMNQKDTSVIIRELADDPDFDRADYEYFRQLLEGVAESIDELDARLAGLLDRQVSELSPIEHAILCIAAYELIHDVTIPYRVAINEGVELAKLYGGTDGHKYVNGVLDKIAAEARPDEFQRGRR.

This sequence belongs to the NusB family.

In terms of biological role, involved in transcription antitermination. Required for transcription of ribosomal RNA (rRNA) genes. Binds specifically to the boxA antiterminator sequence of the ribosomal RNA (rrn) operons. The sequence is that of Transcription antitermination protein NusB from Methylobacillus flagellatus (strain ATCC 51484 / DSM 6875 / VKM B-1610 / KT).